Here is a 98-residue protein sequence, read N- to C-terminus: Feather keratin 4 (98 aa).

The residue at position 2 (serine 2) is an N-acetylserine.

It belongs to the avian keratin family. As to quaternary structure, the avian keratins (F-ker, S-ker, C-ker and B-ker) are a complex mixture of very similar polypeptides.

The polypeptide is Feather keratin 4 (Gallus gallus (Chicken)).